Reading from the N-terminus, the 648-residue chain is Probable alpha-galactosidase D (648 aa).

Residues 1–17 form the signal peptide; it reads MESIVWLLLLSPALVAG. Residues N84 and N90 are each glycosylated (N-linked (GlcNAc...) asparagine). C123 and C156 are oxidised to a cystine. The active-site Nucleophile is D154. 199–203 is a substrate binding site; it reads EWGID. Catalysis depends on D221, which acts as the Proton donor. N-linked (GlcNAc...) asparagine glycosylation is found at N339, N505, and N572.

This sequence belongs to the glycosyl hydrolase 27 family.

The protein resides in the secreted. The enzyme catalyses Hydrolysis of terminal, non-reducing alpha-D-galactose residues in alpha-D-galactosides, including galactose oligosaccharides, galactomannans and galactolipids.. In terms of biological role, hydrolyzes a variety of simple alpha-D-galactoside as well as more complex molecules such as oligosaccharides and polysaccharides. The chain is Probable alpha-galactosidase D (aglD) from Neosartorya fischeri (strain ATCC 1020 / DSM 3700 / CBS 544.65 / FGSC A1164 / JCM 1740 / NRRL 181 / WB 181) (Aspergillus fischerianus).